A 156-amino-acid polypeptide reads, in one-letter code: MPRKGPVAKRDVLPDPIYNSKLVSRLINKMMIDGKRGKSQTILYKSFDIIKERTGNEAMEVFEQALKNIMPVLEVKARRVGGANYQVPVEVRPDRRTTLGLRWLVNYARLRGEKTMEERLANEILDAANNTGAAVKKREDTHKMAEANKAFAHYRW.

It belongs to the universal ribosomal protein uS7 family. In terms of assembly, part of the 30S ribosomal subunit. Contacts proteins S9 and S11.

In terms of biological role, one of the primary rRNA binding proteins, it binds directly to 16S rRNA where it nucleates assembly of the head domain of the 30S subunit. Is located at the subunit interface close to the decoding center, probably blocks exit of the E-site tRNA. This Bacillus pumilus (strain SAFR-032) protein is Small ribosomal subunit protein uS7.